The sequence spans 206 residues: Charged multivesicular body protein 6 (206 aa).

Glycine 2 carries the N-myristoyl glycine lipid modification. A coiled-coil region spans residues 11 to 103 (TRVTEQDRAV…AQIEMKVIEG (93 aa)). The interval 167 to 206 (EADLELPEVPGEELPEVPEQEPVREKERVKKKPEREMVAV) is disordered. The span at 168–185 (ADLELPEVPGEELPEVPE) shows a compositional bias: acidic residues. A Type-2 MIT-interacting motif motif is present at residues 170-181 (LELPEVPGEELP). Residues 187-206 (EPVREKERVKKKPEREMVAV) show a composition bias toward basic and acidic residues.

This sequence belongs to the SNF7 family. Probable core component of the endosomal sorting required for transport complex III (ESCRT-III). ESCRT-III components are thought to multimerize to form a flat lattice on the perimeter membrane of the endosome.

The protein localises to the endomembrane system. It is found in the late endosome membrane. In terms of biological role, probable core component of the endosomal sorting required for transport complex III (ESCRT-III) which is involved in multivesicular bodies (MVBs) formation and sorting of endosomal cargo proteins into MVBs. MVBs contain intraluminal vesicles (ILVs) that are generated by invagination and scission from the limiting membrane of the endosome and mostly are delivered to lysosomes enabling degradation of membrane proteins, such as stimulated growth factor receptors, lysosomal enzymes and lipids. In the ESCRT-III complex, it probably serves as an acceptor for the ESCRT-II complex on endosomal membranes. This chain is Charged multivesicular body protein 6 (chmp6), found in Danio rerio (Zebrafish).